We begin with the raw amino-acid sequence, 398 residues long: Phosphoglycerate kinase (398 aa).

Residues aspartate 23–asparagine 25, arginine 38, histidine 61–arginine 64, arginine 119, and arginine 152 contribute to the substrate site. ATP is bound by residues lysine 202, glutamate 324, and glycine 354 to threonine 357.

It belongs to the phosphoglycerate kinase family. In terms of assembly, monomer.

Its subcellular location is the cytoplasm. The catalysed reaction is (2R)-3-phosphoglycerate + ATP = (2R)-3-phospho-glyceroyl phosphate + ADP. The protein operates within carbohydrate degradation; glycolysis; pyruvate from D-glyceraldehyde 3-phosphate: step 2/5. This is Phosphoglycerate kinase from Rhodopseudomonas palustris (strain ATCC BAA-98 / CGA009).